The chain runs to 318 residues: Methionyl-tRNA formyltransferase (318 aa).

A (6S)-5,6,7,8-tetrahydrofolate-binding site is contributed by 113–116; the sequence is SLLP.

This sequence belongs to the Fmt family.

The enzyme catalyses L-methionyl-tRNA(fMet) + (6R)-10-formyltetrahydrofolate = N-formyl-L-methionyl-tRNA(fMet) + (6S)-5,6,7,8-tetrahydrofolate + H(+). In terms of biological role, attaches a formyl group to the free amino group of methionyl-tRNA(fMet). The formyl group appears to play a dual role in the initiator identity of N-formylmethionyl-tRNA by promoting its recognition by IF2 and preventing the misappropriation of this tRNA by the elongation apparatus. The chain is Methionyl-tRNA formyltransferase from Hahella chejuensis (strain KCTC 2396).